A 127-amino-acid chain; its full sequence is MSDNEDNFDGDDFDDVEEDEGLDDLENAEEEGQENVEILPSGERPQANQKRITTPYMTKYERARVLGTRALQIAMCAPVMVELEGETDPLLIAMKELKARKIPIIIRRYLPDGSYEDWGVDELIITD.

A compositionally biased stretch (acidic residues) spans 1–34 (MSDNEDNFDGDDFDDVEEDEGLDDLENAEEEGQE). The segment at 1 to 53 (MSDNEDNFDGDDFDDVEEDEGLDDLENAEEEGQENVEILPSGERPQANQKRIT) is disordered. N-acetylserine is present on S2. Position 2 is a phosphoserine; by CK2 (S2).

This sequence belongs to the archaeal Rpo6/eukaryotic RPB6 RNA polymerase subunit family. As to quaternary structure, component of the RNA polymerase I (Pol I), RNA polymerase II (Pol II) and RNA polymerase III (Pol III) complexes consisting of at least 13, 12 and 17 subunits, respectively. Pol I complex consists of a ten-subunit catalytic core composed of POLR1A/RPA1, POLR1B/RPA2, POLR1C/RPAC1, POLR1D/RPAC2, POLR1H/RPA12, POLR2E/RPABC1, POLR2F/RPABC2, POLR2H/RPABC3, POLR2K/RPABC4 and POLR2L/RPABC5; a mobile stalk subunit POLR1F/RPA43 protruding from the core and additional subunits homologous to general transcription factors POLR1E/RPA49 and POLR1G/RPA34. Part of Pol I pre-initiation complex (PIC), in which Pol I core assembles with RRN3 and promoter-bound UTBF and SL1/TIF-IB complex. Pol II complex contains a ten-subunit catalytic core composed of POLR2A/RPB1, POLR2B/RPB2, POLR2C/RPB3, POLR2I/RPB9, POLR2J/RPB11, POLR2E/RPABC1, POLR2F/RPABC2, POLR2H/RPABC3, POLR2K/RPABC4 and POLR2L/RPABC5 and a mobile stalk composed of two subunits POLR2D/RPB4 and POLR2G/RPB7. Part of Pol II(G) complex, in which Pol II core associates with an additional subunit POLR2M; unlike conventional Pol II, Pol II(G) functions as a transcriptional repressor. Part of TBP-based Pol II pre-initiation complex (PIC), in which Pol II core assembles with general transcription factors and other specific initiation factors including GTF2E1, GTF2E2, GTF2F1, GTF2F2, TCEA1, ERCC2, ERCC3, GTF2H2, GTF2H3, GTF2H4, GTF2H5, GTF2A1, GTF2A2, GTF2B and TBP; this large multi-subunit PIC complex mediates DNA unwinding and targets Pol II core to the transcription start site where the first phosphodiester bond forms. Pol III complex consists of a ten-subunit catalytic core composed of POLR3A/RPC1, POLR3B/RPC2, POLR1C/RPAC1, POLR1D/RPAC2, POLR3K/RPC10, POLR2E/RPABC1, POLR2F/RPABC2, POLR2H/RPABC3, POLR2K/RPABC4 and POLR2L/RPABC5; a mobile stalk composed of two subunits POLR3H/RPC8 and CRCP/RPC9, protruding from the core and functioning primarily in transcription initiation; and additional subunits homologous to general transcription factors of the RNA polymerase II machinery, POLR3C/RPC3-POLR3F/RPC6-POLR3G/RPC7 heterotrimer required for transcription initiation and POLR3D/RPC4-POLR3E/RPC5 heterodimer involved in both transcription initiation and termination.

The protein localises to the nucleus. It localises to the nucleolus. DNA-dependent RNA polymerase catalyzes the transcription of DNA into RNA using the four ribonucleoside triphosphates as substrates. Common component of RNA polymerases I, II, and III which synthesize ribosomal RNA precursors, mRNA precursors and many functional non-coding RNAs, and small RNAs, such as 5S rRNA and tRNAs, respectively. Pol II is the central component of the basal RNA polymerase II transcription machinery. Pols are composed of mobile elements that move relative to each other. In Pol II, POLR2F/RPABC2 is part of the clamp element and together with parts of POLR2A/RPB1 and POLR2B/RPB2 forms a pocket to which the POLR2D/RPB4-POLR2G/RPB7 subcomplex binds. This chain is DNA-directed RNA polymerases I, II, and III subunit RPABC2, found in Homo sapiens (Human).